The following is a 93-amino-acid chain: MIQMSSNDSSEVIRQCLQVLESITSDSSVPRNIRRSVNEIMDILNNESEPLFLRAASSISILEDISNDPNLPLHTRTLIWNLSSQLETIPVDE.

The protein belongs to the UPF0147 family.

In Methanosarcina mazei (strain ATCC BAA-159 / DSM 3647 / Goe1 / Go1 / JCM 11833 / OCM 88) (Methanosarcina frisia), this protein is UPF0147 protein MM_1385.